The primary structure comprises 501 residues: Serine/threonine protein phosphatase 2A 55 kDa regulatory subunit B beta isoform (501 aa).

Residue Met1 is modified to N-acetylmethionine. WD repeat units lie at residues 34 to 73, 110 to 151, 220 to 258, 269 to 309, and 328 to 366; these read QEVDIISAIEFDKSGDHLATGDRGGRVVLFERTDTKDHGG, EIEE…IKKI, AHDYHINSISNSSDGETFISADDLRVNLWNLEISNQSFN, DLTE…LCDS, and EIIASISDIKFSKDGRYILSRDYMTLKLWDINMDSGPVA. Positions 439–449 are enriched in polar residues; the sequence is TPARPSRSIGS. Residues 439–466 are disordered; the sequence is TPARPSRSIGSMTRVVRRGSESPGTEAN. One copy of the WD 6 repeat lies at 471 to 501; it reads DFTTKLLHMAWHPTENSIACAAANSLYMYYA.

The protein belongs to the phosphatase 2A regulatory subunit B family. PP2A consists of a common heteromeric enzyme, composed of a catalytic subunit (subunits C), a constant regulatory subunit (subunit A), and a variety of regulatory subunits such as subunits B (the R2/B/PR55/B55, R3/B''/PR72/PR130/PR59 and R5/B'/B56 families). Interacts with SIC/RON3. As to expression, expressed ubiquitously.

Its function is as follows. The B regulatory subunit may modulate substrate selectivity and catalytic activity, and may also direct the localization of the catalytic enzyme to a particular subcellular compartment. The protein is Serine/threonine protein phosphatase 2A 55 kDa regulatory subunit B beta isoform (PP2AB2) of Arabidopsis thaliana (Mouse-ear cress).